A 161-amino-acid chain; its full sequence is Ribosome maturation factor RimP (161 aa).

Belongs to the RimP family.

It is found in the cytoplasm. Functionally, required for maturation of 30S ribosomal subunits. The chain is Ribosome maturation factor RimP from Rickettsia africae (strain ESF-5).